We begin with the raw amino-acid sequence, 257 residues long: MLVLVSPAKTLDYENKAGTIEHTLPKLVQHSEQLIEECRKLAPSDIASLMKVSDKIAGLNAARFTSWSRDFSTDNAKQALYAFRGDVYTGLDADTLSQQSIERAQKHLRILSGLYGLLRPLDLMQPYRLEMGTRLANIKGTNLYQFWGDVITDEVNLALSEQGDQIVVNLASNEYFKAVKPKSLNGSLITPIFKDRKNGQYKVISFFAKRARGMMVRYILDNNIKTFSGLTEFDAAGYYYCEAESTAQAPVFKREEQ.

It belongs to the UPF0246 family.

The polypeptide is UPF0246 protein Ssed_1188 (Shewanella sediminis (strain HAW-EB3)).